Consider the following 77-residue polypeptide: Acyl carrier protein (77 aa).

Positions 1–76 (MSLEDDVKAI…DVIKYIQERQ (76 aa)) constitute a Carrier domain. At Ser-36 the chain carries O-(pantetheine 4'-phosphoryl)serine.

It belongs to the acyl carrier protein (ACP) family. In terms of processing, 4'-phosphopantetheine is transferred from CoA to a specific serine of apo-ACP by AcpS. This modification is essential for activity because fatty acids are bound in thioester linkage to the sulfhydryl of the prosthetic group.

It localises to the cytoplasm. It functions in the pathway lipid metabolism; fatty acid biosynthesis. Functionally, carrier of the growing fatty acid chain in fatty acid biosynthesis. In Chlamydia trachomatis serovar A (strain ATCC VR-571B / DSM 19440 / HAR-13), this protein is Acyl carrier protein.